The chain runs to 107 residues: Large ribosomal subunit protein bL21 (107 aa).

Belongs to the bacterial ribosomal protein bL21 family. Part of the 50S ribosomal subunit. Contacts protein L20.

Its function is as follows. This protein binds to 23S rRNA in the presence of protein L20. The chain is Large ribosomal subunit protein bL21 from Chlamydia trachomatis serovar L2 (strain ATCC VR-902B / DSM 19102 / 434/Bu).